Here is a 169-residue protein sequence, read N- to C-terminus: Disulfide bond formation protein B 1 (169 aa).

Residues 1–14 (MSDDRLGLGRERRF) are Cytoplasmic-facing. A helical membrane pass occupies residues 15-31 (LVLLGIICLALIGGALY). Topologically, residues 32-49 (MQVVLGEAPCPLCILQRY) are periplasmic. A disulfide bridge connects residues Cys41 and Cys44. A helical membrane pass occupies residues 50-64 (ALLLIALFAFIGAAM). Residues 65 to 71 (SSRRGVT) are Cytoplasmic-facing. Residues 72–89 (VMETLVVICALAGAGVAG) traverse the membrane as a helical segment. Residues 90–144 (HHVYTQFYPSVSCGIDVLQPIVDSLPLAKIFPLGFQVDGFCSTPYPPILGLSLAQ) are Periplasmic-facing. Cys102 and Cys130 are joined by a disulfide. A helical transmembrane segment spans residues 145–163 (WALVAFVLTVILVPLGVVR). Residues 164–169 (NRKKTY) are Cytoplasmic-facing.

The protein belongs to the DsbB family.

It is found in the cell inner membrane. Its function is as follows. Required for disulfide bond formation in some periplasmic proteins. Acts by oxidizing the DsbA protein. The protein is Disulfide bond formation protein B 1 of Pseudomonas fluorescens (strain ATCC BAA-477 / NRRL B-23932 / Pf-5).